A 455-amino-acid chain; its full sequence is Bifunctional protein GlmU (455 aa).

The interval 1 to 226 (MSLEIVILAA…PMEVQGANDR (226 aa)) is pyrophosphorylase. UDP-N-acetyl-alpha-D-glucosamine contacts are provided by residues 8–11 (LAAG), Lys22, Gln73, 78–79 (GT), 99–101 (YGD), Gly136, Glu151, Asn166, and Asn224. Asp101 serves as a coordination point for Mg(2+). Mg(2+) is bound at residue Asn224. Residues 227–247 (KQLSELERHYQLRAGRRLMAQ) form a linker region. An N-acetyltransferase region spans residues 248–455 (GVTLRDPARF…WKRPEKIKKN (208 aa)). 2 residues coordinate UDP-N-acetyl-alpha-D-glucosamine: Arg330 and Lys348. The Proton acceptor role is filled by His360. 2 residues coordinate UDP-N-acetyl-alpha-D-glucosamine: Tyr363 and Asn374. Residues Ala377, 383–384 (NY), Ser402, Ala420, and Arg437 contribute to the acetyl-CoA site.

The protein in the N-terminal section; belongs to the N-acetylglucosamine-1-phosphate uridyltransferase family. It in the C-terminal section; belongs to the transferase hexapeptide repeat family. As to quaternary structure, homotrimer. Mg(2+) is required as a cofactor.

The protein localises to the cytoplasm. It carries out the reaction alpha-D-glucosamine 1-phosphate + acetyl-CoA = N-acetyl-alpha-D-glucosamine 1-phosphate + CoA + H(+). The catalysed reaction is N-acetyl-alpha-D-glucosamine 1-phosphate + UTP + H(+) = UDP-N-acetyl-alpha-D-glucosamine + diphosphate. It participates in nucleotide-sugar biosynthesis; UDP-N-acetyl-alpha-D-glucosamine biosynthesis; N-acetyl-alpha-D-glucosamine 1-phosphate from alpha-D-glucosamine 6-phosphate (route II): step 2/2. Its pathway is nucleotide-sugar biosynthesis; UDP-N-acetyl-alpha-D-glucosamine biosynthesis; UDP-N-acetyl-alpha-D-glucosamine from N-acetyl-alpha-D-glucosamine 1-phosphate: step 1/1. The protein operates within bacterial outer membrane biogenesis; LPS lipid A biosynthesis. In terms of biological role, catalyzes the last two sequential reactions in the de novo biosynthetic pathway for UDP-N-acetylglucosamine (UDP-GlcNAc). The C-terminal domain catalyzes the transfer of acetyl group from acetyl coenzyme A to glucosamine-1-phosphate (GlcN-1-P) to produce N-acetylglucosamine-1-phosphate (GlcNAc-1-P), which is converted into UDP-GlcNAc by the transfer of uridine 5-monophosphate (from uridine 5-triphosphate), a reaction catalyzed by the N-terminal domain. This Pseudomonas fluorescens (strain Pf0-1) protein is Bifunctional protein GlmU.